Here is a 235-residue protein sequence, read N- to C-terminus: Putative N-acetylmannosamine-6-phosphate 2-epimerase (235 aa).

Belongs to the NanE family.

It carries out the reaction an N-acyl-D-glucosamine 6-phosphate = an N-acyl-D-mannosamine 6-phosphate. The protein operates within amino-sugar metabolism; N-acetylneuraminate degradation; D-fructose 6-phosphate from N-acetylneuraminate: step 3/5. Converts N-acetylmannosamine-6-phosphate (ManNAc-6-P) to N-acetylglucosamine-6-phosphate (GlcNAc-6-P). In Enterobacter sp. (strain 638), this protein is Putative N-acetylmannosamine-6-phosphate 2-epimerase.